The primary structure comprises 712 residues: Amino-acid acetyltransferase, mitochondrial (712 aa).

A mitochondrion-targeting transit peptide spans methionine 1–threonine 47. Residues phenylalanine 55–aspartate 99 form a disordered region. Positions lysine 63 to glutamine 74 are enriched in basic and acidic residues. The segment covering proline 81–glutamate 93 has biased composition (low complexity). Positions glycine 534–proline 702 constitute an N-acetyltransferase domain.

This sequence belongs to the acetyltransferase family.

The protein resides in the mitochondrion. The enzyme catalyses L-glutamate + acetyl-CoA = N-acetyl-L-glutamate + CoA + H(+). The protein operates within amino-acid biosynthesis; L-arginine biosynthesis; N(2)-acetyl-L-ornithine from L-glutamate: step 1/4. With respect to regulation, inhibited by arginine. Functionally, N-acetylglutamate synthase involved in arginine biosynthesis. This chain is Amino-acid acetyltransferase, mitochondrial (arg-14), found in Neurospora crassa (strain ATCC 24698 / 74-OR23-1A / CBS 708.71 / DSM 1257 / FGSC 987).